The following is a 503-amino-acid chain: Na(+)-translocating NADH-quinone reductase subunit B (503 aa).

5 helical membrane passes run 55 to 75, 85 to 105, 120 to 142, 161 to 181, and 186 to 206; these read MMLVVIALMPTVFVAIWNSGL, PQIMEAFLHISGFTSYFSFVS, IFLPLLFISYAVGGTCEVLFAII, ILPPTIPYWMAALGIAFGVVI, and FGGTGMNILNPALTGRAFLFF. Residue threonine 248 is modified to FMN phosphoryl threonine. 5 helical membrane passes run 361 to 381, 387 to 407, 417 to 437, 452 to 472, and 475 to 495; these read TSTVACLLGAGLLLLTGIASW, FGLSSLFFAWLFKIISILAAG, FFIPVYRHLFIGGLAFGLVFM, WFYGAFIGFLTILIRLINPAY, and GVMLAILLGNVFAPSFDRIAL.

Belongs to the NqrB/RnfD family. Composed of six subunits; NqrA, NqrB, NqrC, NqrD, NqrE and NqrF. FMN is required as a cofactor.

Its subcellular location is the cell inner membrane. It catalyses the reaction a ubiquinone + n Na(+)(in) + NADH + H(+) = a ubiquinol + n Na(+)(out) + NAD(+). Functionally, NQR complex catalyzes the reduction of ubiquinone-1 to ubiquinol by two successive reactions, coupled with the transport of Na(+) ions from the cytoplasm to the periplasm. NqrA to NqrE are probably involved in the second step, the conversion of ubisemiquinone to ubiquinol. This is Na(+)-translocating NADH-quinone reductase subunit B from Chlamydia muridarum (strain MoPn / Nigg).